Consider the following 610-residue polypeptide: Glutamine--fructose-6-phosphate aminotransferase [isomerizing] (610 aa).

Cys-2 (nucleophile; for GATase activity) is an active-site residue. The Glutamine amidotransferase type-2 domain maps to 2 to 218 (CGIVGAVAQR…EGDVAEITRR (217 aa)). 2 SIS domains span residues 286–426 (AAEI…QQGR) and 459–600 (LATD…VDQP). Lys-605 serves as the catalytic For Fru-6P isomerization activity.

As to quaternary structure, homodimer.

The protein localises to the cytoplasm. It catalyses the reaction D-fructose 6-phosphate + L-glutamine = D-glucosamine 6-phosphate + L-glutamate. Its function is as follows. Catalyzes the first step in hexosamine metabolism, converting fructose-6P into glucosamine-6P using glutamine as a nitrogen source. The polypeptide is Glutamine--fructose-6-phosphate aminotransferase [isomerizing] (Vibrio vulnificus (strain CMCP6)).